Consider the following 152-residue polypeptide: UPF0178 protein SAS0646 (152 aa).

The protein belongs to the UPF0178 family.

The polypeptide is UPF0178 protein SAS0646 (Staphylococcus aureus (strain MSSA476)).